The sequence spans 570 residues: Proline--tRNA ligase (570 aa).

Belongs to the class-II aminoacyl-tRNA synthetase family. ProS type 1 subfamily. In terms of assembly, homodimer.

It localises to the cytoplasm. The catalysed reaction is tRNA(Pro) + L-proline + ATP = L-prolyl-tRNA(Pro) + AMP + diphosphate. In terms of biological role, catalyzes the attachment of proline to tRNA(Pro) in a two-step reaction: proline is first activated by ATP to form Pro-AMP and then transferred to the acceptor end of tRNA(Pro). As ProRS can inadvertently accommodate and process non-cognate amino acids such as alanine and cysteine, to avoid such errors it has two additional distinct editing activities against alanine. One activity is designated as 'pretransfer' editing and involves the tRNA(Pro)-independent hydrolysis of activated Ala-AMP. The other activity is designated 'posttransfer' editing and involves deacylation of mischarged Ala-tRNA(Pro). The misacylated Cys-tRNA(Pro) is not edited by ProRS. The sequence is that of Proline--tRNA ligase from Pelotomaculum thermopropionicum (strain DSM 13744 / JCM 10971 / SI).